A 1297-amino-acid chain; its full sequence is Phosphoribosylformylglycinamidine synthase (1297 aa).

ATP is bound by residues 307 to 318 (GASTGSGGEIRD) and alanine 678. Mg(2+) contacts are provided by glutamate 718, asparagine 722, and aspartate 886. The 254-residue stretch at 1044 to 1297 (MAILREQGVN…MFQNARKNLA (254 aa)) folds into the Glutamine amidotransferase type-1 domain. Cysteine 1137 serves as the catalytic Nucleophile. Catalysis depends on residues histidine 1262 and glutamate 1264.

In the N-terminal section; belongs to the FGAMS family. As to quaternary structure, monomer.

It localises to the cytoplasm. It carries out the reaction N(2)-formyl-N(1)-(5-phospho-beta-D-ribosyl)glycinamide + L-glutamine + ATP + H2O = 2-formamido-N(1)-(5-O-phospho-beta-D-ribosyl)acetamidine + L-glutamate + ADP + phosphate + H(+). Its pathway is purine metabolism; IMP biosynthesis via de novo pathway; 5-amino-1-(5-phospho-D-ribosyl)imidazole from N(2)-formyl-N(1)-(5-phospho-D-ribosyl)glycinamide: step 1/2. In terms of biological role, phosphoribosylformylglycinamidine synthase involved in the purines biosynthetic pathway. Catalyzes the ATP-dependent conversion of formylglycinamide ribonucleotide (FGAR) and glutamine to yield formylglycinamidine ribonucleotide (FGAM) and glutamate. The polypeptide is Phosphoribosylformylglycinamidine synthase (Vibrio vulnificus (strain YJ016)).